The following is a 280-amino-acid chain: ATP synthase gamma chain (280 aa).

This sequence belongs to the ATPase gamma chain family. In terms of assembly, F-type ATPases have 2 components, CF(1) - the catalytic core - and CF(0) - the membrane proton channel. CF(1) has five subunits: alpha(3), beta(3), gamma(1), delta(1), epsilon(1). CF(0) has three main subunits: a, b and c.

The protein resides in the cell membrane. Its function is as follows. Produces ATP from ADP in the presence of a proton gradient across the membrane. The gamma chain is believed to be important in regulating ATPase activity and the flow of protons through the CF(0) complex. The sequence is that of ATP synthase gamma chain from Mycoplasma mycoides subsp. mycoides SC (strain CCUG 32753 / NCTC 10114 / PG1).